The sequence spans 1755 residues: Transposon Ty1-OL Gag-Pol polyprotein (1755 aa).

Composition is skewed to polar residues over residues 1 to 23 (MESQ…SVTS), 48 to 60 (TKAN…TPAS), and 127 to 152 (QSQF…GNTF). 3 disordered regions span residues 1-93 (MESQ…MMTQ), 126-173 (PQSQ…RPPP), and 352-421 (GSRN…SKST). Over residues 153–165 (TDSSSADSDMTST) the composition is skewed to low complexity. Residues 299–401 (NNGIHINNKV…NSKSKTARAH (103 aa)) are RNA-binding. Residues 402 to 418 (NVSTSNNSPSTDNDSIS) are compositionally biased toward low complexity. Residue serine 416 is modified to Phosphoserine. The active-site For protease activity; shared with dimeric partner is the aspartate 461. The segment at 583-640 (NVHTSESTRKYPYPFIHRMLAHANAQTIRYSLKNNTITYFNESDVDWSSAIDYQCPDC) is integrase-type zinc finger-like. Residues 660–835 (NSYEPFQYLH…AGLDISTLLP (176 aa)) enclose the Integrase catalytic domain. Mg(2+) is bound by residues aspartate 671 and aspartate 736. Disordered regions lie at residues 956–1087 (SKAV…ETEK), 1092–1111 (RSPS…NIVP), and 1130–1171 (DLPL…DSNA). A compositionally biased stretch (low complexity) spans 960-969 (SPTDSTPPST). The segment covering 1005-1015 (STPQISNIEST) has biased composition (polar residues). Over residues 1038–1053 (ESSHASKSKDFRHSDS) the composition is skewed to basic and acidic residues. 2 stretches are compositionally biased toward polar residues: residues 1054-1082 (YSEN…QISD) and 1101-1111 (PENNSSHNIVP). The short motif at 1178–1212 (KKRSLEDNETEIKVSRDTWNTKNMRSLEPPRSKKR) is the Bipartite nuclear localization signal element. One can recognise a Reverse transcriptase Ty1/copia-type domain in the interval 1338–1476 (NNYYITQLDI…DILGLEIKYQ (139 aa)). Residues aspartate 1346, aspartate 1427, aspartate 1428, aspartate 1610, glutamate 1652, and aspartate 1685 each contribute to the Mg(2+) site. An RNase H Ty1/copia-type domain is found at 1610-1752 (DASYGNQPYY…IKTFKLLTNK (143 aa)).

In terms of assembly, the capsid protein forms a homotrimer, from which the VLPs are assembled. The protease is a homodimer, whose active site consists of two apposed aspartic acid residues. Post-translationally, initially, virus-like particles (VLPs) are composed of the structural unprocessed proteins Gag and Gag-Pol, and also contain the host initiator methionine tRNA (tRNA(i)-Met) which serves as a primer for minus-strand DNA synthesis, and a dimer of genomic Ty RNA. Processing of the polyproteins occurs within the particle and proceeds by an ordered pathway, called maturation. First, the protease (PR) is released by autocatalytic cleavage of the Gag-Pol polyprotein yielding capsid protein p45 and a Pol-p154 precursor protein. This cleavage is a prerequisite for subsequent processing of Pol-p154 at the remaining sites to release the mature structural and catalytic proteins. Maturation takes place prior to the RT reaction and is required to produce transposition-competent VLPs.

The protein resides in the cytoplasm. Its subcellular location is the nucleus. The catalysed reaction is DNA(n) + a 2'-deoxyribonucleoside 5'-triphosphate = DNA(n+1) + diphosphate. It carries out the reaction Endonucleolytic cleavage to 5'-phosphomonoester.. Functionally, capsid protein (CA) is the structural component of the virus-like particle (VLP), forming the shell that encapsulates the retrotransposons dimeric RNA genome. The particles are assembled from trimer-clustered units and there are holes in the capsid shells that allow for the diffusion of macromolecules. CA also has nucleocapsid-like chaperone activity, promoting primer tRNA(i)-Met annealing to the multipartite primer-binding site (PBS), dimerization of Ty1 RNA and initiation of reverse transcription. The aspartyl protease (PR) mediates the proteolytic cleavages of the Gag and Gag-Pol polyproteins after assembly of the VLP. In terms of biological role, reverse transcriptase/ribonuclease H (RT) is a multifunctional enzyme that catalyzes the conversion of the retro-elements RNA genome into dsDNA within the VLP. The enzyme displays a DNA polymerase activity that can copy either DNA or RNA templates, and a ribonuclease H (RNase H) activity that cleaves the RNA strand of RNA-DNA heteroduplexes during plus-strand synthesis and hydrolyzes RNA primers. The conversion leads to a linear dsDNA copy of the retrotransposon that includes long terminal repeats (LTRs) at both ends. Its function is as follows. Integrase (IN) targets the VLP to the nucleus, where a subparticle preintegration complex (PIC) containing at least integrase and the newly synthesized dsDNA copy of the retrotransposon must transit the nuclear membrane. Once in the nucleus, integrase performs the integration of the dsDNA into the host genome. This chain is Transposon Ty1-OL Gag-Pol polyprotein (TY1B-OL), found in Saccharomyces cerevisiae (strain ATCC 204508 / S288c) (Baker's yeast).